A 173-amino-acid polypeptide reads, in one-letter code: Photosystem I assembly protein Ycf3 (173 aa).

TPR repeat units follow at residues 35–68, 72–105, and 120–153; these read AYIY…EENK, GETL…NPKQ, and GRYA…YPGG.

It belongs to the Ycf3 family.

The protein resides in the cellular thylakoid membrane. Essential for the assembly of the photosystem I (PSI) complex. May act as a chaperone-like factor to guide the assembly of the PSI subunits. In Prochlorococcus marinus (strain MIT 9215), this protein is Photosystem I assembly protein Ycf3.